We begin with the raw amino-acid sequence, 253 residues long: Probable transcriptional regulatory protein RAF_ORF0717 (253 aa).

Residues 1 to 21 (MAGHSKFKNIQHRKGAQDKKR) form a disordered region.

The protein belongs to the TACO1 family.

It localises to the cytoplasm. The chain is Probable transcriptional regulatory protein RAF_ORF0717 from Rickettsia africae (strain ESF-5).